Here is a 715-residue protein sequence, read N- to C-terminus: Polyribonucleotide nucleotidyltransferase (715 aa).

2 residues coordinate Mg(2+): Asp497 and Asp503. One can recognise a KH domain in the interval 564 to 623; the sequence is PRLLTMKIDPEQIGLVIGPGGKTIKSITEQTGSKIDIADDGTVTIAAIQAKKAERARDLI. In terms of domain architecture, S1 motif spans 633–701; that stretch reads GEVYLGRVTR…NKGRLNLTRL (69 aa).

It belongs to the polyribonucleotide nucleotidyltransferase family. It depends on Mg(2+) as a cofactor.

It is found in the cytoplasm. The catalysed reaction is RNA(n+1) + phosphate = RNA(n) + a ribonucleoside 5'-diphosphate. Involved in mRNA degradation. Catalyzes the phosphorolysis of single-stranded polyribonucleotides processively in the 3'- to 5'-direction. This chain is Polyribonucleotide nucleotidyltransferase, found in Crocosphaera subtropica (strain ATCC 51142 / BH68) (Cyanothece sp. (strain ATCC 51142)).